A 291-amino-acid chain; its full sequence is Ribosomal RNA small subunit methyltransferase A (291 aa).

Histidine 21, leucine 23, glycine 48, glutamate 70, aspartate 95, and asparagine 115 together coordinate S-adenosyl-L-methionine.

This sequence belongs to the class I-like SAM-binding methyltransferase superfamily. rRNA adenine N(6)-methyltransferase family. RsmA subfamily.

It localises to the cytoplasm. It carries out the reaction adenosine(1518)/adenosine(1519) in 16S rRNA + 4 S-adenosyl-L-methionine = N(6)-dimethyladenosine(1518)/N(6)-dimethyladenosine(1519) in 16S rRNA + 4 S-adenosyl-L-homocysteine + 4 H(+). Specifically dimethylates two adjacent adenosines (A1518 and A1519) in the loop of a conserved hairpin near the 3'-end of 16S rRNA in the 30S particle. May play a critical role in biogenesis of 30S subunits. The polypeptide is Ribosomal RNA small subunit methyltransferase A (Prochlorococcus marinus (strain NATL2A)).